Consider the following 238-residue polypeptide: Putative tyrosine-protein phosphatase OCA1 (238 aa).

The interval 1 to 43 (MTSKVGEYEDVPEDESRLTEENVSVPEEEVEDEDEEEDDDDDH) is disordered. Threonine 2 carries the N-acetylthreonine modification. Serine 24 is subject to Phosphoserine. A compositionally biased stretch (acidic residues) spans 26-42 (PEEEVEDEDEEEDDDDD). Positions 72–230 (NFCPVERYLY…LVKIDKNKAP (159 aa)) constitute a Tyrosine-protein phosphatase domain. The Phosphocysteine intermediate role is filled by cysteine 168.

This sequence belongs to the protein-tyrosine phosphatase family.

Its subcellular location is the cytoplasm. It catalyses the reaction O-phospho-L-tyrosyl-[protein] + H2O = L-tyrosyl-[protein] + phosphate. Its function is as follows. Putative tyrosine-protein phosphatase required for protection against superoxide stress. Involved in cell-cycle delay in response to linoleic acid hydroperoxide (LoaOOH). The protein is Putative tyrosine-protein phosphatase OCA1 (OCA1) of Saccharomyces cerevisiae (strain YJM789) (Baker's yeast).